The chain runs to 86 residues: Small ribosomal subunit protein bS18 (86 aa).

Belongs to the bacterial ribosomal protein bS18 family. Part of the 30S ribosomal subunit. Forms a tight heterodimer with protein bS6.

Its function is as follows. Binds as a heterodimer with protein bS6 to the central domain of the 16S rRNA, where it helps stabilize the platform of the 30S subunit. The chain is Small ribosomal subunit protein bS18 from Heliobacterium modesticaldum (strain ATCC 51547 / Ice1).